A 385-amino-acid polypeptide reads, in one-letter code: HAT1-interacting factor 1 (385 aa).

The segment at 80 to 199 (GNLFGDALLA…RKSGFHIYFE (120 aa)) is important for interaction with heterotetrameric histone H3 and H4 and for interaction with dimeric histone H2A and H2B. Composition is skewed to low complexity over residues 85-97 (DALL…SGSE) and 105-116 (DVSNGEEGNENG). Residues 85–163 (DALLAGDDGS…EEENVEKEEE (79 aa)) form a disordered region. Over residues 129-160 (DQEEEDLTGDVDSGDSEDSGEGSEEEEENVEK) the composition is skewed to acidic residues. S174 carries the post-translational modification Phosphoserine. TPR repeat units follow at residues 186-220 (VSQL…LGRP), 229-262 (ENSR…YLKA), and 289-322 (ALRW…RPKD). The interval 248–332 (EAEMFSRAIH…SELQQARLAQ (85 aa)) is interaction with dimeric histone H2A and H2B. Residues 340–385 (VQENQQHGSKRPLSQPTTSIGFPALEKPLGDFNDLSQLVKKKPRRH) form a disordered region. Positions 342-359 (ENQQHGSKRPLSQPTTSI) are enriched in polar residues.

It belongs to the NASP family. In terms of assembly, homodimer. The homodimer interacts with a histone tetramer containing H3 and H4; the interaction is direct. The homodimer interacts with heterodimeric histone H2A and H2B; the interaction is direct. Component of the nuclear histone acetyltransferase B (HAT-B) complex composed of at least HAT1, HAT2 and HIF1. Does not interact with HAT1 in the absence of HAT2. Interacts with histones H3 and H4 in a HAT1/HAT2 dependent manner. Interaction with heterotetrameric histone H3 and H4 precludes interaction with dimeric histone H2A and H2B, irrespective of the fact that their binding involves non-identical regions of the protein.

Its subcellular location is the nucleus. Histone H3 and H4 specific chaperone component of the nuclear histone acetyltransferase B (HAT-B) complex. Involved in chromatin assembly and telomere silencing. This is HAT1-interacting factor 1 (HIF1) from Saccharomyces cerevisiae (strain ATCC 204508 / S288c) (Baker's yeast).